A 79-amino-acid chain; its full sequence is RNA-binding protein Hfq (79 aa).

One can recognise a Sm domain in the interval 10 to 69; that stretch reads DPFLNALRKEHVPVSIYLVNGIKLQGNIESFDQYVVLLRNTVTQMVYKHAISTVVPARPV.

Belongs to the Hfq family. As to quaternary structure, homohexamer.

Functionally, RNA chaperone that binds small regulatory RNA (sRNAs) and mRNAs to facilitate mRNA translational regulation in response to envelope stress, environmental stress and changes in metabolite concentrations. Also binds with high specificity to tRNAs. The chain is RNA-binding protein Hfq from Burkholderia cenocepacia (strain HI2424).